The primary structure comprises 148 residues: Deoxyuridine 5'-triphosphate nucleotidohydrolase (148 aa).

Substrate-binding positions include 68-70 (RSG), Asn81, 85-87 (TID), and Lys95.

Belongs to the dUTPase family. The cofactor is Mg(2+).

It carries out the reaction dUTP + H2O = dUMP + diphosphate + H(+). The protein operates within pyrimidine metabolism; dUMP biosynthesis; dUMP from dCTP (dUTP route): step 2/2. Functionally, this enzyme is involved in nucleotide metabolism: it produces dUMP, the immediate precursor of thymidine nucleotides and it decreases the intracellular concentration of dUTP so that uracil cannot be incorporated into DNA. The sequence is that of Deoxyuridine 5'-triphosphate nucleotidohydrolase from Rickettsia massiliae (strain Mtu5).